A 664-amino-acid polypeptide reads, in one-letter code: Intraflagellar transport protein 70B (664 aa).

7 TPR repeats span residues 11-44, 45-78, 153-186, 188-220, 385-418, 423-456, and 458-491; these read DGEF…SPRS, RAGL…HPEL, LDGQ…SGYR, DLSY…GIRQ, LTEQ…YEDT, IPVL…CNDH, and VWKL…HYDN. The stretch at 509 to 532 forms a coiled coil; sequence MISQNEEAEELMRKIGKEEEQLSY. Residues 543–576 form a TPR 8 repeat; that stretch reads CIVNLVIGTLYCAKGNYDFGISRVIKSLEPCNKK.

This sequence belongs to the TTC30/dfy-1/fleer family. As to quaternary structure, interacts with the IFT B complex components IFT27, IFT46, IFT74, IFT52, IFT57, IFT80, IFT81 and IFT88. Interacts with KIF17.

It localises to the cell projection. The protein localises to the cilium. Its function is as follows. Required for polyglutamylation of axonemal tubulin. Plays a role in anterograde intraflagellar transport (IFT), the process by which cilia precursors are transported from the base of the cilium to the site of their incorporation at the tip. The polypeptide is Intraflagellar transport protein 70B (IFT70B) (Bos taurus (Bovine)).